A 341-amino-acid polypeptide reads, in one-letter code: tRNA N6-adenosine threonylcarbamoyltransferase (341 aa).

Fe cation is bound by residues His117 and His121. Substrate is bound by residues 140 to 144 (VVSGG), Asp173, Gly186, and Asn278. Asp306 serves as a coordination point for Fe cation.

This sequence belongs to the KAE1 / TsaD family. It depends on Fe(2+) as a cofactor.

Its subcellular location is the cytoplasm. The enzyme catalyses L-threonylcarbamoyladenylate + adenosine(37) in tRNA = N(6)-L-threonylcarbamoyladenosine(37) in tRNA + AMP + H(+). In terms of biological role, required for the formation of a threonylcarbamoyl group on adenosine at position 37 (t(6)A37) in tRNAs that read codons beginning with adenine. Is involved in the transfer of the threonylcarbamoyl moiety of threonylcarbamoyl-AMP (TC-AMP) to the N6 group of A37, together with TsaE and TsaB. TsaD likely plays a direct catalytic role in this reaction. The protein is tRNA N6-adenosine threonylcarbamoyltransferase of Symbiobacterium thermophilum (strain DSM 24528 / JCM 14929 / IAM 14863 / T).